The sequence spans 283 residues: Homeobox protein Hox-A9a (283 aa).

Disordered stretches follow at residues 25–54 (VPRY…GTCS) and 162–181 (EKDA…EKPG). The segment at residues 216–275 (TRKKRCPYTKHQILELEKEFLFNTYLTRDRRYEVARLLNLTERQVKIWFQNRRMKMKKFN) is a DNA-binding region (homeobox).

It belongs to the Abd-B homeobox family.

The protein resides in the nucleus. Functionally, sequence-specific transcription factor which is part of a developmental regulatory system that provides cells with specific positional identities on the anterior-posterior axis. This Takifugu rubripes (Japanese pufferfish) protein is Homeobox protein Hox-A9a (hoxa9a).